A 137-amino-acid chain; its full sequence is Small ribosomal subunit protein uS12 (137 aa).

Disordered regions lie at residues 1-22 (MPTI…SKSP) and 35-57 (ATNN…TPKK). Residues 9–18 (RKPRKSKVSK) are compositionally biased toward basic residues. Aspartate 102 carries the post-translational modification 3-methylthioaspartic acid.

Belongs to the universal ribosomal protein uS12 family. Part of the 30S ribosomal subunit. Contacts proteins S8 and S17. May interact with IF1 in the 30S initiation complex.

In terms of biological role, with S4 and S5 plays an important role in translational accuracy. Interacts with and stabilizes bases of the 16S rRNA that are involved in tRNA selection in the A site and with the mRNA backbone. Located at the interface of the 30S and 50S subunits, it traverses the body of the 30S subunit contacting proteins on the other side and probably holding the rRNA structure together. The combined cluster of proteins S8, S12 and S17 appears to hold together the shoulder and platform of the 30S subunit. This Leuconostoc mesenteroides subsp. mesenteroides (strain ATCC 8293 / DSM 20343 / BCRC 11652 / CCM 1803 / JCM 6124 / NCDO 523 / NBRC 100496 / NCIMB 8023 / NCTC 12954 / NRRL B-1118 / 37Y) protein is Small ribosomal subunit protein uS12.